The sequence spans 631 residues: tRNA 5-methylaminomethyl-2-thiouridine biosynthesis bifunctional protein MnmC (631 aa).

The segment at 1-243 (MITDLRPPAM…KREMLTGRLP (243 aa)) is tRNA (mnm(5)s(2)U34)-methyltransferase. The FAD-dependent cmnm(5)s(2)U34 oxidoreductase stretch occupies residues 261–631 (IGAGIAGAAL…GRLYRNQLTV (371 aa)).

In the N-terminal section; belongs to the methyltransferase superfamily. tRNA (mnm(5)s(2)U34)-methyltransferase family. The protein in the C-terminal section; belongs to the DAO family. It depends on FAD as a cofactor.

The protein resides in the cytoplasm. It catalyses the reaction 5-aminomethyl-2-thiouridine(34) in tRNA + S-adenosyl-L-methionine = 5-methylaminomethyl-2-thiouridine(34) in tRNA + S-adenosyl-L-homocysteine + H(+). Catalyzes the last two steps in the biosynthesis of 5-methylaminomethyl-2-thiouridine (mnm(5)s(2)U) at the wobble position (U34) in tRNA. Catalyzes the FAD-dependent demodification of cmnm(5)s(2)U34 to nm(5)s(2)U34, followed by the transfer of a methyl group from S-adenosyl-L-methionine to nm(5)s(2)U34, to form mnm(5)s(2)U34. This is tRNA 5-methylaminomethyl-2-thiouridine biosynthesis bifunctional protein MnmC from Marinobacter nauticus (strain ATCC 700491 / DSM 11845 / VT8) (Marinobacter aquaeolei).